The chain runs to 528 residues: Esterase PE16 (528 aa).

The PE domain occupies 1 to 93 (MSFVFAVPEM…AGWYVDAEAA (93 aa)). The tract at residues 94–143 (NAALVDTAATGASELGSGGRTALILGSTGTPRPPFDYMQQVYDRYIAPHY) is linker. Residues 149-369 (SGLYTPAQFQ…LRAIIELGYD (221 aa)) enclose the PE-PPE domain. Residue Ser-199 is part of the active site. Residues 503–523 (IALLVFAAGIPAVAAVAILTG) form a helical membrane-spanning segment.

It belongs to the mycobacterial PE family.

The protein resides in the membrane. It carries out the reaction a hexanoate ester + H2O = an aliphatic alcohol + hexanoate + H(+). It catalyses the reaction an octanoate ester + H2O = an aliphatic alcohol + octanoate + H(+). The enzyme catalyses a butanoate ester + H2O = an aliphatic alcohol + butanoate + H(+). Esterase activity is significantly inhibited by the serine modifier phenylmethylsulfonyl fluoride (PMSF). Its function is as follows. Esterase that hydrolyzes short to medium chain fatty acid esters with the highest specific activity for p-nitrophenyl caproate (pNPC6). Has lower activity with p-nitrophenyl caprylate (pNPC8) and p-nitrophenyl butyrate (pNPC4). Has weak activity with p-nitrophenyl caprate (pNPC10) and p-nitrophenyl laurate (pNPC12). Does not possess lipolytic activity and cutinase activity. The chain is Esterase PE16 from Mycobacterium tuberculosis (strain ATCC 25618 / H37Rv).